The following is a 299-amino-acid chain: Putative ankyrin repeat protein R864 (299 aa).

ANK repeat units lie at residues 78 to 107 (SLNK…NIES), 108 to 137 (NNNY…NIKS), 139 to 167 (NNRV…DIRS), 168 to 197 (NDDY…DIRS), 199 to 227 (YYYI…DIRA), 228 to 257 (YNNC…DIRN), and 258 to 287 (DNDY…DIKT).

The sequence is that of Putative ankyrin repeat protein R864 from Acanthamoeba polyphaga mimivirus (APMV).